Reading from the N-terminus, the 174-residue chain is Trypsin inhibitor BvTI (174 aa).

Disulfide bonds link Cys41/Cys84 and Cys131/Cys138.

It belongs to the protease inhibitor I3 (leguminous Kunitz-type inhibitor) family.

The protein localises to the secreted. In terms of biological role, inhibits bovine trypsin and chymotrypsin, and human plasmin, plasma kallikrein and factor XIIa. This Bauhinia variegata (Purple orchid tree) protein is Trypsin inhibitor BvTI.